Here is a 149-residue protein sequence, read N- to C-terminus: Endothelin-1 (149 aa).

The propeptide occupies 1 to 33 (AAETVVSGAELSLTANSGGEKTPPHAPGLLRRS). The segment at 6 to 26 (VSGAELSLTANSGGEKTPPHA) is disordered. Intrachain disulfides connect Cys-36-Cys-50 and Cys-38-Cys-46. The propeptide occupies 57 to 149 (VNTPGHIAPY…ISQQLGNGKK (93 aa)). An endothelin-like region spans residues 93 to 107 (CQCANQKDKKCWNFC).

This sequence belongs to the endothelin/sarafotoxin family.

It is found in the secreted. Functionally, endothelins are endothelium-derived vasoconstrictor peptides. Probable ligand for G-protein coupled receptors EDNRA and EDNRB which activates PTK2B, BCAR1, BCAR3 and, GTPases RAP1 and RHOA cascade in glomerular mesangial cells. Also binds the DEAR/FBXW7-AS1 receptor. Promotes mesenteric arterial wall remodeling via activation of ROCK signaling and subsequent colocalization of NFATC3 with F-actin filaments. NFATC3 then translocates to the nucleus where it subsequently promotes the transcription of the smooth muscle hypertrophy and differentiation marker ACTA2. The protein is Endothelin-1 (EDN1) of Cavia porcellus (Guinea pig).